The primary structure comprises 598 residues: Rho-related protein racA (598 aa).

11 to 17 (DGAVGKS) serves as a coordination point for GTP. Positions 32–40 (YVPTVFDNY) match the Effector region motif. GTP is bound by residues 57-61 (DTAGQ) and 115-118 (TKND). Residues 175–210 (ASAKKKGGFFSSSSSSSSSSSSKSSEKSVPIPPVMP) are disordered. Residues 182–197 (GFFSSSSSSSSSSSSK) are compositionally biased toward low complexity. BTB domains are found at residues 239 to 344 (SDVK…NYLD) and 405 to 472 (SDIQ…PIEE).

It in the N-terminal section; belongs to the small GTPase superfamily. Rho family. As to quaternary structure, interacts with pakB.

The sequence is that of Rho-related protein racA (racA) from Dictyostelium discoideum (Social amoeba).